A 95-amino-acid chain; its full sequence is UPF0235 protein PTH_1821 (95 aa).

This sequence belongs to the UPF0235 family.

In Pelotomaculum thermopropionicum (strain DSM 13744 / JCM 10971 / SI), this protein is UPF0235 protein PTH_1821.